The chain runs to 97 residues: Secreted LysM effector Mg1LysM (97 aa).

The signal sequence occupies residues 1 to 18 (MQFTALVAALLSVAAVQA). In terms of domain architecture, LysM spans 37 to 84 (QQYVARSGDTLTKIAQEIYHDVVGVCDIARANNLADPNRIDAGTPYTI). Chitin contacts are provided by Gly-44, Thr-48, Asn-74, and Ile-76.

It belongs to the secreted LysM effector family. As to quaternary structure, forms homodimers in a chitin-independent manner through interactions at the N-termini of Mg1LysM monomers. Homodimers are further polymerized in a chitin-dependent manner.

The protein localises to the secreted. The protein resides in the cell wall. Its function is as follows. Secreted effector that enables the plant pathogenic fungus to manipulate host defenses for successful infection. Binds chitin but not cellulose or xylan. Chitin-induced polymerization of homodimers forms a contiguous Mg1LysM highly oligomeric super-complexe that is anchored to the chitin in the fungal cell wall to prevent hydrolysis by host chitinases. The polypeptide is Secreted LysM effector Mg1LysM (Zymoseptoria tritici (strain ST99CH_3D7)).